The following is a 726-amino-acid chain: BRCA1-A complex subunit RAP80 (726 aa).

Residues 1–27 (MPRRKKKIKEASEGQNLEKKDLETTSS) form a disordered region. The segment at 1–101 (MPRRKKKIKE…SEQEAKEVNN (101 aa)) is necessary for transcriptional repression. Positions 9–23 (KEASEGQNLEKKDLE) are enriched in basic and acidic residues. Residue lysine 20 forms a Glycyl lysine isopeptide (Lys-Gly) (interchain with G-Cter in SUMO2) linkage. At serine 29 the chain carries Phosphoserine. A Glycyl lysine isopeptide (Lys-Gly) (interchain with G-Cter in SUMO2) cross-link involves residue lysine 31. A phosphoserine mark is found at serine 44 and serine 46. The tract at residues 47 to 67 (DGEETKEENGLQKMKTKQSNR) is disordered. Threonine 51 is subject to Phosphothreonine. Positions 60-78 (MKTKQSNRSKCLAKRKIAQ) match the LR motif motif. Glycyl lysine isopeptide (Lys-Gly) (interchain with G-Cter in SUMO2) cross-links involve residues lysine 75 and lysine 90. 2 UIM domains span residues 80–99 (SEEE…AKEV) and 104–124 (EKEE…RWSS). Disordered regions lie at residues 93–112 (EQEA…LLRK) and 119–208 (NSRW…SRPV). Residues 97-103 (KEVNNQE) are UIM-linker. A necessary for interaction with NR6A1 N-terminus region spans residues 100 to 200 (NNQEEKEEEL…EEPLSGSSGS (101 aa)). Serine 140 is modified (phosphoserine). Over residues 177–188 (EEGKEPWDHSEN) the composition is skewed to basic and acidic residues. Over residues 194–205 (LSGSSGSQDQSS) the composition is skewed to low complexity. Residue serine 205 is modified to Phosphoserine. A Glycyl lysine isopeptide (Lys-Gly) (interchain with G-Cter in SUMO2) cross-link involves residue lysine 245. The interval 270 to 400 (IGGTVHYYWG…EEEPTTGRGQ (131 aa)) is AIR. Positions 356–411 (GAREERQGSGASVWHSETKDSQKSPITSLKQRLLLEEEPTTGRGQSSQGLFVEETS) are disordered. Serine 379, serine 402, and serine 427 each carry phosphoserine. The tract at residues 400-507 (QSSQGLFVEE…DSRPPAVSAS (108 aa)) is necessary for interaction with NR6A1 C-terminus. Lysine 436 participates in a covalent cross-link: Glycyl lysine isopeptide (Lys-Gly) (interchain with G-Cter in SUMO2). A UBZ4-type zinc finger spans residues 509–536 (RVSCPLCNQDFPPTKIEQHAMYCTGLME). Zn(2+) is bound by residues cysteine 512, cysteine 515, histidine 527, and cysteine 531. The zinc-finger-like region stretch occupies residues 512–589 (CPLCNQDFPP…GEYQCHVETC (78 aa)). Residues lysine 551, lysine 569, and lysine 616 each participate in a glycyl lysine isopeptide (Lys-Gly) (interchain with G-Cter in SUMO2) cross-link. The segment at 611-675 (APVEGKPKQR…DVEEAGCSRE (65 aa)) is disordered. Serine 636 carries the post-translational modification Phosphoserine. Residues 640 to 653 (QSEHRTTGVERTPK) are compositionally biased toward basic and acidic residues. Residues serine 664 and serine 688 each carry the phosphoserine modification. Residue lysine 707 forms a Glycyl lysine isopeptide (Lys-Gly) (interchain with G-Cter in SUMO2) linkage.

Belongs to the RAP80 family. Component of the ARISC complex, at least composed of UIMC1/RAP80, ABRAXAS1, BRCC3/BRCC36, BABAM2 and BABAM1/NBA1. Component of the BRCA1-A complex, at least composed of the BRCA1, BARD1, UIMC1/RAP80, ABRAXAS1, BRCC3/BRCC36, BABAM2 and BABAM1/NBA1. In the BRCA1-A complex, interacts directly with ABRAXAS1. Interacts with UBE2I. Interacts with NR6A1. Interacts with ESR1. Interacts with TSP57. Interacts with TRAIP. In terms of processing, sumoylated. Phosphorylated upon DNA damage by ATM or ATR.

Its subcellular location is the nucleus. Ubiquitin-binding protein. Specifically recognizes and binds 'Lys-63'-linked ubiquitin. Plays a central role in the BRCA1-A complex by specifically binding 'Lys-63'-linked ubiquitinated histones H2A and H2AX at DNA lesions sites, leading to target the BRCA1-BARD1 heterodimer to sites of DNA damage at double-strand breaks (DSBs). The BRCA1-A complex also possesses deubiquitinase activity that specifically removes 'Lys-63'-linked ubiquitin on histones H2A and H2AX. Also weakly binds monoubiquitin but with much less affinity than 'Lys-63'-linked ubiquitin. May interact with monoubiquitinated histones H2A and H2B; the relevance of such results is however unclear in vivo. Does not bind Lys-48'-linked ubiquitin. May indirectly act as a transcriptional repressor by inhibiting the interaction of NR6A1 with the corepressor NCOR1. The polypeptide is BRCA1-A complex subunit RAP80 (Uimc1) (Rattus norvegicus (Rat)).